Consider the following 677-residue polypeptide: DNA ligase (677 aa).

Residues 34–38 (DAQYD), 84–85 (SL), and glutamate 118 contribute to the NAD(+) site. Lysine 120 acts as the N6-AMP-lysine intermediate in catalysis. NAD(+)-binding residues include arginine 141, glutamate 176, lysine 283, and lysine 307. Zn(2+)-binding residues include cysteine 403, cysteine 406, cysteine 421, and cysteine 427. One can recognise a BRCT domain in the interval 594-677 (ETASPISGKT…DLLKTVSNSE (84 aa)).

The protein belongs to the NAD-dependent DNA ligase family. LigA subfamily. Mg(2+) serves as cofactor. Requires Mn(2+) as cofactor.

The catalysed reaction is NAD(+) + (deoxyribonucleotide)n-3'-hydroxyl + 5'-phospho-(deoxyribonucleotide)m = (deoxyribonucleotide)n+m + AMP + beta-nicotinamide D-nucleotide.. Functionally, DNA ligase that catalyzes the formation of phosphodiester linkages between 5'-phosphoryl and 3'-hydroxyl groups in double-stranded DNA using NAD as a coenzyme and as the energy source for the reaction. It is essential for DNA replication and repair of damaged DNA. This is DNA ligase from Anaplasma phagocytophilum (strain HZ).